The chain runs to 40 residues: Large ribosomal subunit protein bL36 (40 aa).

Belongs to the bacterial ribosomal protein bL36 family.

This is Large ribosomal subunit protein bL36 from Coxiella burnetii (strain Dugway 5J108-111).